The chain runs to 289 residues: Phosphatidylinositol:ceramide inositolphosphotransferase 3 (289 aa).

5 helical membrane-spanning segments follow: residues L33 to Y53, A77 to H97, V115 to L135, V169 to V189, and R199 to S219. The active site involves H181. Active-site residues include H222 and D226. A helical transmembrane segment spans residues Y223–S243. The interval A249–H289 is disordered. Positions K266–L279 are enriched in basic and acidic residues. Residues L280 to H289 show a composition bias toward polar residues.

Belongs to the sphingomyelin synthase family. In terms of tissue distribution, mostly expressed in stems and flowers, and, to a lower extent, in leaves, roots and siliques.

The protein resides in the membrane. Functionally, catalyzes the transfer of the phosphorylinositol group from phosphatidylinositol (PI) to phytoceramide, an essential step in sphingolipid biosynthesis. The polypeptide is Phosphatidylinositol:ceramide inositolphosphotransferase 3 (IPCS3) (Arabidopsis thaliana (Mouse-ear cress)).